The following is a 314-amino-acid chain: Cytochrome f (314 aa).

A signal peptide spans 1 to 29 (MTRSISISVLIISVLIMIYVITRTSISNA). Heme contacts are provided by Y30, C50, C53, and H54. A helical transmembrane segment spans residues 280 to 300 (VQGLLFFLASVILAQIFLVLK).

The protein belongs to the cytochrome f family. The 4 large subunits of the cytochrome b6-f complex are cytochrome b6, subunit IV (17 kDa polypeptide, petD), cytochrome f and the Rieske protein, while the 4 small subunits are PetG, PetL, PetM and PetN. The complex functions as a dimer. Heme serves as cofactor.

The protein localises to the plastid. Its subcellular location is the chloroplast thylakoid membrane. Its function is as follows. Component of the cytochrome b6-f complex, which mediates electron transfer between photosystem II (PSII) and photosystem I (PSI), cyclic electron flow around PSI, and state transitions. This chain is Cytochrome f, found in Illicium oligandrum (Star anise).